Here is a 159-residue protein sequence, read N- to C-terminus: UPF0756 membrane protein PTH_1668 (159 aa).

Transmembrane regions (helical) follow at residues 15–37 (ILITLLFLGLFGRSNLVVSSSCI), 61–81 (LGLVLLMLHILSPVATEKLTI), 117–137 (PEIIFGLTVGTVLGILFLRGT), and 138–158 (PCGPVMAAAVTAVFLQIASLF).

Belongs to the UPF0756 family.

The protein localises to the cell membrane. The sequence is that of UPF0756 membrane protein PTH_1668 from Pelotomaculum thermopropionicum (strain DSM 13744 / JCM 10971 / SI).